The following is a 118-amino-acid chain: DNA-directed RNA polymerase subunit omega (118 aa).

The protein belongs to the RNA polymerase subunit omega family. As to quaternary structure, the RNAP catalytic core consists of 2 alpha, 1 beta, 1 beta' and 1 omega subunit. When a sigma factor is associated with the core the holoenzyme is formed, which can initiate transcription.

It carries out the reaction RNA(n) + a ribonucleoside 5'-triphosphate = RNA(n+1) + diphosphate. Promotes RNA polymerase assembly. Latches the N- and C-terminal regions of the beta' subunit thereby facilitating its interaction with the beta and alpha subunits. In Paracoccus denitrificans (strain Pd 1222), this protein is DNA-directed RNA polymerase subunit omega.